The primary structure comprises 314 residues: Hydrolase 4 (314 aa).

The Involved in the stabilization of the negatively charged intermediate by the formation of the oxyanion hole signature appears at 73 to 75 (HGA). Catalysis depends on residues serine 165 and aspartate 260.

This sequence belongs to the 'GDXG' lipolytic enzyme family.

Its pathway is alkaloid biosynthesis. Component of the seco-iridoid and derivatives monoterpenoid indole alkaloids (MIAs, e.g. vincadifformine) biosynthesis pathway. Catalyzes the conversion of O-acetylstemmadenine (OAS) to vincadifformine. May also trigger the formation of additional unknown MIAs. This Catharanthus roseus (Madagascar periwinkle) protein is Hydrolase 4.